We begin with the raw amino-acid sequence, 37 residues long: Large ribosomal subunit protein bL36c (37 aa).

This sequence belongs to the bacterial ribosomal protein bL36 family.

It is found in the plastid. It localises to the chloroplast. The polypeptide is Large ribosomal subunit protein bL36c (Pleurastrum terricola (Filamentous green alga)).